The primary structure comprises 523 residues: Non-specific phospholipase C3 (523 aa).

The disordered stretch occupies residues 44–64; that stretch reads DGVSESEPRSNPLSTSDPNSA. Polar residues predominate over residues 52–64; that stretch reads RSNPLSTSDPNSA.

The protein belongs to the bacterial phospholipase C family. Expressed in root tips, cotyledons, on leaf margins, stems, young anthers and funiculus.

It carries out the reaction a 1-acyl-sn-glycero-3-phosphate + H2O = a 1-acyl-sn-glycerol + phosphate. Its function is as follows. Possesses specific phosphatase activity toward lysophosphatidic acid (LPA) in vitro. Does not show phospholipase C activity. May play a role in signal transduction and storage lipid synthesis. May be involved in brassinolide-mediated signaling in root development. The sequence is that of Non-specific phospholipase C3 (NPC3) from Arabidopsis thaliana (Mouse-ear cress).